We begin with the raw amino-acid sequence, 216 residues long: Octanoyltransferase (216 aa).

The 189-residue stretch at 24-212 (KFRKECILFL…NLCSFLEPIN (189 aa)) folds into the BPL/LPL catalytic domain. Residues 69–76 (RGGDFTAH), 140–142 (SIG), and 153–155 (GIA) each bind substrate. C171 serves as the catalytic Acyl-thioester intermediate.

Belongs to the LipB family.

Its subcellular location is the cytoplasm. It catalyses the reaction octanoyl-[ACP] + L-lysyl-[protein] = N(6)-octanoyl-L-lysyl-[protein] + holo-[ACP] + H(+). Its pathway is protein modification; protein lipoylation via endogenous pathway; protein N(6)-(lipoyl)lysine from octanoyl-[acyl-carrier-protein]: step 1/2. In terms of biological role, catalyzes the transfer of endogenously produced octanoic acid from octanoyl-acyl-carrier-protein onto the lipoyl domains of lipoate-dependent enzymes. Lipoyl-ACP can also act as a substrate although octanoyl-ACP is likely to be the physiological substrate. This is Octanoyltransferase from Leptospira interrogans serogroup Icterohaemorrhagiae serovar copenhageni (strain Fiocruz L1-130).